Reading from the N-terminus, the 414-residue chain is MASSAGLALCGHALVVRGGSRLLATSTSSSDGDSLFIYDCSAAEKKSQENKGEDGQPVDQGSDTVLASTFSKSGSYFVLTDDSKRLILFRTNPWQCLSVRTVVRRCTALTFTASEEKILVADKSGDVYSFSVLEPHGGGRLELGHLSMLLDVAVSPDDRFVLTADRDEKIRVSWAAAPHSIESFCLGHTEFVSRIFVVPNHPELLLSSSGDCTLRLWEYRSGRELHCCPLTSLQEPTEPWSDKRFAVSRITYWSQEDCVALSCDGLPVVYIFQLDAAQRQLVPRQLLTFQHRVWDAAFEEGHGLWVLQDCREDPLVLYRPVGGQWQSAPESAELRRVCAHVRVNWAMLEGCAGVDSGFSSLYKATCDNMTTYLKKKEERLQQQLEKKRRQAPPPGPNGPTKKMRAGELAQGCSS.

An N-acetylalanine modification is found at A2. WD repeat units follow at residues 60-99 (QGSD…CLSV), 101-140 (TVVR…GGGR), 144-184 (GHLS…IESF), and 187-227 (GHTE…ELHC). The interval 377–414 (EERLQQQLEKKRRQAPPPGPNGPTKKMRAGELAQGCSS) is disordered.

This sequence belongs to the WD repeat TRM82 family. In terms of assembly, non-catalytic component of the METTL1-WDR4 complex, composed of METTL1 and WDR4. Interacts with FEN1; the interaction is direct.

Its subcellular location is the nucleus. It localises to the chromosome. Its pathway is tRNA modification; N(7)-methylguanine-tRNA biosynthesis. Its function is as follows. Non-catalytic component of the METTL1-WDR4 methyltransferase complex required for the formation of N(7)-methylguanine in a subset of RNA species, such as tRNAs, mRNAs and microRNAs (miRNAs). In the METTL1-WDR4 methyltransferase complex, WDR4 acts as a scaffold for tRNA-binding. Required for the formation of N(7)-methylguanine at position 46 (m7G46) in a large subset of tRNAs that contain the 5'-RAGGU-3' motif within the variable loop. M7G46 interacts with C13-G22 in the D-loop to stabilize tRNA tertiary structure and protect tRNAs from decay. Also required for the formation of N(7)-methylguanine at internal sites in a subset of mRNAs. Also required for methylation of a specific subset of miRNAs, such as let-7. Independently of METTL1, also plays a role in genome stability: localizes at the DNA replication site and regulates endonucleolytic activities of FEN1. This chain is tRNA (guanine-N(7)-)-methyltransferase non-catalytic subunit WDR4, found in Bos taurus (Bovine).